Reading from the N-terminus, the 52-residue chain is AANRHLCGSHLVEALYLVCGNRGFFYIPSKMGIVEQCCDTPCSLYDPENYCN.

3 disulfides stabilise this stretch: C7–C38, C19–C51, and C37–C42.

This sequence belongs to the insulin family. In terms of assembly, heterodimer of a B chain and an A chain linked by two disulfide bonds.

It is found in the secreted. Its function is as follows. Insulin decreases blood glucose concentration. It increases cell permeability to monosaccharides, amino acids and fatty acids. It accelerates glycolysis, the pentose phosphate cycle, and glycogen synthesis in liver. This Polypterus senegalus (Senegal bichir) protein is Insulin (ins).